A 313-amino-acid chain; its full sequence is Pseudouridine kinase (313 aa).

It belongs to the carbohydrate kinase PfkB family.

The catalysed reaction is pseudouridine + ATP = psi-UMP + ADP + H(+). Functionally, catalyzes the phosphorylation of pseudouridine to pseudouridine 5'-phosphate (PsiMP). The sequence is that of Pseudouridine kinase (psuK) from Escherichia coli (strain K12).